The following is a 312-amino-acid chain: Methionyl-tRNA formyltransferase (312 aa).

107-110 (SLLP) serves as a coordination point for (6S)-5,6,7,8-tetrahydrofolate.

This sequence belongs to the Fmt family.

The enzyme catalyses L-methionyl-tRNA(fMet) + (6R)-10-formyltetrahydrofolate = N-formyl-L-methionyl-tRNA(fMet) + (6S)-5,6,7,8-tetrahydrofolate + H(+). Attaches a formyl group to the free amino group of methionyl-tRNA(fMet). The formyl group appears to play a dual role in the initiator identity of N-formylmethionyl-tRNA by promoting its recognition by IF2 and preventing the misappropriation of this tRNA by the elongation apparatus. This is Methionyl-tRNA formyltransferase from Endomicrobium trichonymphae.